The sequence spans 121 residues: ATP synthase epsilon chain (121 aa).

This sequence belongs to the ATPase epsilon chain family. As to quaternary structure, F-type ATPases have 2 components, CF(1) - the catalytic core - and CF(0) - the membrane proton channel. CF(1) has five subunits: alpha(3), beta(3), gamma(1), delta(1), epsilon(1). CF(0) has three main subunits: a, b and c.

It localises to the cell membrane. Its function is as follows. Produces ATP from ADP in the presence of a proton gradient across the membrane. This chain is ATP synthase epsilon chain, found in Mycobacterium sp. (strain JLS).